Consider the following 509-residue polypeptide: Maturase K (509 aa).

The protein belongs to the intron maturase 2 family. MatK subfamily.

Its subcellular location is the plastid. The protein localises to the chloroplast. Usually encoded in the trnK tRNA gene intron. Probably assists in splicing its own and other chloroplast group II introns. In Trifolium semipilosum (Kenya clover), this protein is Maturase K.